A 410-amino-acid polypeptide reads, in one-letter code: Phytoene synthase 1, chloroplastic (410 aa).

Residues 1 to 62 (MAIILVRAAS…EAGRPSPAVY (62 aa)) constitute a chloroplast transit peptide.

It belongs to the phytoene/squalene synthase family. As to quaternary structure, monomer. As to expression, expressed in embryos, endosperm and seedling leaves. Expressed in leaves and endosperm.

It localises to the plastid. It is found in the chloroplast stroma. The enzyme catalyses 2 (2E,6E,10E)-geranylgeranyl diphosphate = 15-cis-phytoene + 2 diphosphate. It functions in the pathway carotenoid biosynthesis; phytoene biosynthesis; all-trans-phytoene from geranylgeranyl diphosphate: step 1/1. Its function is as follows. Catalyzes the conversion of geranylgeranyl diphosphate to phytoene. Mediates the first committed step in carotenoid biosynthesis. This is Phytoene synthase 1, chloroplastic from Zea mays (Maize).